Consider the following 635-residue polypeptide: Interferon-induced GTP-binding protein Mx1 (635 aa).

Residues 31 to 309 (DLALPAIAVI…LVHHIELSLP (279 aa)) form the Dynamin-type G domain. Residues 41-48 (GDQSSGKS) are G1 motif. Residue 41–48 (GDQSSGKS) coordinates GTP. Residues 66–68 (VTR) form a G2 motif region. The interval 147–150 (DLPG) is G3 motif. GTP contacts are provided by residues 147 to 151 (DLPGI) and 216 to 219 (TKPD). The interval 216–219 (TKPD) is G4 motif. The tract at residues 248 to 251 (RCRG) is G5 motif. The region spanning 549-635 (LEELMRHLKS…MEARNYLVKF (87 aa)) is the GED domain.

Belongs to the TRAFAC class dynamin-like GTPase superfamily. Dynamin/Fzo/YdjA family.

The protein localises to the cytoplasm. The sequence is that of Interferon-induced GTP-binding protein Mx1 (mx1) from Ictalurus punctatus (Channel catfish).